Consider the following 553-residue polypeptide: 4-coumarate--CoA ligase (553 aa).

ATP-binding residues include Ser-198, Ser-199, Gly-200, Thr-201, Thr-202, and Lys-206. Residues Tyr-248 and Ser-252 each coordinate (E)-4-coumaroyl-AMP. Position 269 (Lys-269) interacts with CoA. Residues 271–340 (EIVPFLELIQ…AKFPNAKLGQ (70 aa)) are SBD1. Ala-318, Gln-340, Gly-341, Thr-345, and Met-353 together coordinate (E)-4-coumaroyl-AMP. ATP is bound by residues Gln-340, Gly-341, and Thr-345. The tract at residues 341–408 (GYGMTEAGPV…IRGDQIMKGY (68 aa)) is SBD2. Asp-429 and Arg-444 together coordinate ATP. Lys-446 and Lys-450 together coordinate (E)-4-coumaroyl-AMP. Positions 452 and 453 each coordinate CoA. Residue Lys-535 coordinates ATP.

Belongs to the ATP-dependent AMP-binding enzyme family. Mg(2+) is required as a cofactor.

It catalyses the reaction (E)-4-coumarate + ATP + CoA = (E)-4-coumaroyl-CoA + AMP + diphosphate. The enzyme catalyses (E)-4-coumarate + ATP + H(+) = (E)-4-coumaroyl-AMP + diphosphate. It carries out the reaction (E)-4-coumaroyl-AMP + CoA = (E)-4-coumaroyl-CoA + AMP + H(+). Its pathway is phytoalexin biosynthesis; 3,4',5-trihydroxystilbene biosynthesis; 3,4',5-trihydroxystilbene from trans-4-coumarate: step 1/2. Its function is as follows. Carboxylate--CoA ligase that may use 4-coumarate as substrate. Follows a two-step reaction mechanism, wherein the carboxylate substrate first undergoes adenylation by ATP, followed by a thioesterification in the presence of CoA to yield the final CoA thioester. The polypeptide is 4-coumarate--CoA ligase (Vanilla planifolia (Vanilla)).